The primary structure comprises 795 residues: Phenylalanine--tRNA ligase beta subunit (795 aa).

A tRNA-binding domain is found at 39–148 (AGTFNGVVVG…LDAPIGTDLR (110 aa)). Positions 401-476 (PKVNTVQLRR…RIYGYNSIPN (76 aa)) constitute a B5 domain. D454, D460, E463, and E464 together coordinate Mg(2+). Residues 701–794 (SKFPANRRDL…VKQRFNAELR (94 aa)) enclose the FDX-ACB domain.

Belongs to the phenylalanyl-tRNA synthetase beta subunit family. Type 1 subfamily. In terms of assembly, tetramer of two alpha and two beta subunits. Mg(2+) is required as a cofactor.

The protein localises to the cytoplasm. The enzyme catalyses tRNA(Phe) + L-phenylalanine + ATP = L-phenylalanyl-tRNA(Phe) + AMP + diphosphate + H(+). This Haemophilus influenzae (strain 86-028NP) protein is Phenylalanine--tRNA ligase beta subunit.